The primary structure comprises 438 residues: Transposon Ty2-F Gag polyprotein (438 aa).

Composition is skewed to polar residues over residues 1 to 11 (MESQQLHQNPH), 19 to 39 (ASVT…SASN), and 49 to 60 (KVNSQQETTPGT). Disordered stretches follow at residues 1 to 86 (MESQ…GQYQ), 366 to 397 (VSRT…AKAH), and 419 to 438 (SSQY…TERI). The tract at residues 295–397 (ENNINVSDRL…SSKPRAAKAH (103 aa)) is RNA-binding. The span at 369–381 (TSPNTTNTKVTTR) shows a compositional bias: low complexity.

In terms of assembly, homotrimer.

It is found in the cytoplasm. Capsid protein (CA) is the structural component of the virus-like particle (VLP), forming the shell that encapsulates the retrotransposons dimeric RNA genome. The particles are assembled from trimer-clustered units and there are holes in the capsid shells that allow for the diffusion of macromolecules. CA also has nucleocapsid-like chaperone activity, promoting primer tRNA(i)-Met annealing to the multipartite primer-binding site (PBS), dimerization of Ty2 RNA and initiation of reverse transcription. This chain is Transposon Ty2-F Gag polyprotein (TY2A-F), found in Saccharomyces cerevisiae (strain ATCC 204508 / S288c) (Baker's yeast).